The sequence spans 446 residues: Chromosomal replication initiator protein DnaA (446 aa).

The segment at 1 to 82 (MENILDLWNQ…ELSIKFVIPQ (82 aa)) is domain I, interacts with DnaA modulators. The domain II stretch occupies residues 83-103 (NQDVEDFMPKPQVKKAVKEDT). Residues 104-332 (SDFPQNMLNP…VAYSSLINKD (229 aa)) form a domain III, AAA+ region region. The ATP site is built by Gly154, Leu155, Gly156, Lys157, and Thr158. Thr158 provides a ligand contact to Mg(2+). The Initiator specific motif (ISM) motif lies at 182–206 (SEKFTNEFINSIRDNKAVDFRNRYR). Residues Asp214 and Asp215 each coordinate Mg(2+). The tract at residues 333–346 (INADLAAEALKDII) is linker. Residues 347–446 (PSSKPKVITI…HVKEIKEQLK (100 aa)) form a domain IV, binds dsDNA region.

This sequence belongs to the DnaA family. As to quaternary structure, the DNA replisome assembles sequentially on oriC in this order; DnaA, DnaD, DnaB, DnaI-DnaC helicase. Oligomerizes as a right-handed, spiral filament on DNA at oriC. Forms an ATP-dependent helix on DNA at oriC; both DnaD and YabA inhibit formation of the DnaA helix. Forms an ATP-dependent oligomer, formation is stimulated by ds- and ssDNA; monomeric ADP-Soj inhibits oligomer formation. Interacts with DnaD. Interacts with YabA, and via YabA, with the replication machinery subunit beta sliding clamp DnaN. Interacts with YabA via domain IIIa (residues 109-275). Isolated domain I forms a 1:1 complex with SirA. Interacts with Soj, probably via domain III. Interacts via domains I and III with CcrZ. Interacts via domain IV with skin prophage-like element protein YqaH.

The protein localises to the cytoplasm. It localises to the nucleoid. The enzyme catalyses ATP + H2O = ADP + phosphate + H(+). Its activity is regulated as follows. Oligomerization of DnaA can be controlled by Soj; monomeric ADP-Soj inhibits formation of the DnaA helix. YabA prevents the cooperative binding of DnaA-ATP to oriC-containing sequences; increased levels of DnaN (beta sliding clamp subunit of DNA polymerase) removes YabA from association with DnaA on the chromosome, enabling increased association of DnaA with its chromosomal binding sites. Both Soj and YabA chase DnaA from oriC site, YabA tethers DnaA to the DNA replication fork via the beta sliding clamp subunit DnaN. SirA antagonizes the ability of DnaA to bind to the replication origin, and thus decreases replication inititation during sporulation. Small protein YqaH, part of the skin prophage-like element, binds to DnaA and antagonizes its replication initiation and transcriptional regulation activities. In terms of biological role, plays an essential role in the initiation and regulation of chromosomal replication. ATP-DnaA binds to the origin of replication (oriC) to initiate formation of the DNA replication initiation complex once per cell cycle. Binds directly to oriC at a 9 bp consensus (DnaA box): 5'-TTATCCACA-3' and separates the double-stranded (ds)DNA. Forms a right-handed helical filament on oriC DNA; dsDNA binds to the exterior of the filament while single-stranded (ss)DNA is stabilized in the filament's interior. The ATP-DnaA-oriC complex binds and stabilizes one strand of the AT-rich DNA unwinding element (DUE or basal unwinding system, BUS), permitting loading of DNA polymerase. Binds ATP with high affinity, ADP with lower affinity, but not AMP, cAMP or cGMP; ATP stimulates binding to DnaA boxes. Once bound promotes sequence-specific strand separation of DnaA-trios (3'-GAT-5' consensus) adjacent to oriC in the presence of ATP but not ADP. Domains III and IV are sufficient to separate dsDNA strands. The 'initiator specific motif' (ISM) of domain III contacts the middle adenine residue of the DnaA-trio probably stretching and stabilizing ssDNA. DnaA-trio recognition is co-operative and depends on DnaA self-assembly. The ssDNA serves as an assembly region for the replication machinery. Tethered to DnaN (beta sliding clamp subunit of DNA polymerase) and thus replication forks by YabA. During replication initiation DnaA-ATP binds cooperatively to sequences in oriC. YabA prevents this cooperative binding while still allowing DnaA to bind DNA. During the cell cycle an initial phase occurs in which DnaA is associated with origin regions, then the origin regions become spatially separate from the centrally sequestered DnaA molecules, and most DnaA molecules are unable to reassociate with origin regions. Does not require YabA to bind DNA. During sporulation SirA prevents DnaA association with the replication origin to prevent excessive chromosome replication. Overexpression induces the SOS response; increasing expression of downstream dnaN blocks this induction. Over-initiation of DNA replication is very deleterious; isolated suppressors in relA, ndrR, dnaC, cshA and crrZ increase replication elongation, decrease replication inititation or lead to a decrease in the replicative DNA helicase. Binds acidic phospholipids. The half-life of ADP-DnaA is 1.5 minutes, of ATP-DnaA is 5 minutes at 37 degrees Celsius; in E.coli the half-life of ADP-DnaA is about 45 minutes. Functionally, also acts as a transcriptional regulator. DnaA inhibits its own gene expression. DnaA binds specifically to the promoter regions of at least 20 operons (56 genes), including itself, sda and dnaB, and probably controls their expression in response to DNA replication inhibition. In Bacillus subtilis (strain 168), this protein is Chromosomal replication initiator protein DnaA.